Reading from the N-terminus, the 338-residue chain is DNA-directed RNA polymerase subunit alpha (338 aa).

An alpha N-terminal domain (alpha-NTD) region spans residues 1–234 (MIHKNWAELI…DQLSIFVNFE (234 aa)). The interval 250–338 (FNPLLLKKVD…DLAKRFEDQF (89 aa)) is alpha C-terminal domain (alpha-CTD).

The protein belongs to the RNA polymerase alpha chain family. As to quaternary structure, homodimer. The RNAP catalytic core consists of 2 alpha, 1 beta, 1 beta' and 1 omega subunit. When a sigma factor is associated with the core the holoenzyme is formed, which can initiate transcription.

The catalysed reaction is RNA(n) + a ribonucleoside 5'-triphosphate = RNA(n+1) + diphosphate. DNA-dependent RNA polymerase catalyzes the transcription of DNA into RNA using the four ribonucleoside triphosphates as substrates. The protein is DNA-directed RNA polymerase subunit alpha of Cereibacter sphaeroides (strain ATCC 17025 / ATH 2.4.3) (Rhodobacter sphaeroides).